The sequence spans 285 residues: Sulfotransferase 2A1 (285 aa).

Lysine 44, serine 45, glycine 46, threonine 47, asparagine 48, and tryptophan 49 together coordinate 3'-phosphoadenylyl sulfate. The active-site Proton acceptor is histidine 99. Residues arginine 121, serine 129, tyrosine 184, serine 218, methionine 223, arginine 247, lysine 248, and glycine 249 each coordinate 3'-phosphoadenylyl sulfate.

This sequence belongs to the sulfotransferase 1 family. In terms of assembly, homodimer. As to expression, highly expressed in liver.

The protein resides in the cytoplasm. The catalysed reaction is an alcohol + 3'-phosphoadenylyl sulfate = an alkyl sulfate + adenosine 3',5'-bisphosphate + H(+). The enzyme catalyses taurolithocholate + 3'-phosphoadenylyl sulfate = taurolithocholate 3-sulfate + adenosine 3',5'-bisphosphate + H(+). It catalyses the reaction pregnenolone + 3'-phosphoadenylyl sulfate = pregnenolone sulfate + adenosine 3',5'-bisphosphate + H(+). It carries out the reaction 3beta-hydroxyandrost-5-en-17-one + 3'-phosphoadenylyl sulfate = dehydroepiandrosterone 3-sulfate + adenosine 3',5'-bisphosphate + H(+). The catalysed reaction is lithocholate + 3'-phosphoadenylyl sulfate = lithocholate sulfate + adenosine 3',5'-bisphosphate + H(+). The enzyme catalyses (24S)-hydroxycholesterol + 3'-phosphoadenylyl sulfate = (24S)-hydroxycholesterol 24-sulfate + adenosine 3',5'-bisphosphate + H(+). It catalyses the reaction (24S)-hydroxycholesterol + 3'-phosphoadenylyl sulfate = (24S)-hydroxycholesterol 3-sulfate + adenosine 3',5'-bisphosphate + H(+). It carries out the reaction (24S)-hydroxycholesterol 24-sulfate + 3'-phosphoadenylyl sulfate = (24S)-hydroxycholesterol 3,24-disulfate + adenosine 3',5'-bisphosphate + H(+). The catalysed reaction is androsterone + 3'-phosphoadenylyl sulfate = androsterone 3alpha-sulfate + adenosine 3',5'-bisphosphate + H(+). Its function is as follows. Sulfotransferase that utilizes 3'-phospho-5'-adenylyl sulfate (PAPS) as sulfonate donor to catalyze the sulfonation of steroids and bile acids in the liver and adrenal glands. Mediates the sulfation of a wide range of steroids and sterols, including pregnenolone, androsterone, DHEA, bile acids, cholesterol and as well many xenobiotics that contain alcohol and phenol functional groups. Sulfonation increases the water solubility of most compounds, and therefore their renal excretion, but it can also result in bioactivation to form active metabolites. Plays an important role in maintening steroid and lipid homeostasis. Plays a key role in bile acid metabolism. In addition, catalyzes the metabolic activation of potent carcinogenic polycyclic arylmethanols. The protein is Sulfotransferase 2A1 (Sult2a1) of Mus musculus (Mouse).